Reading from the N-terminus, the 559-residue chain is uncharacterized protein (559 aa).

Disordered regions lie at residues 315-360 and 454-559; these read TDDA…ERDI and DKID…STEN. Residues 320–329 show a composition bias toward polar residues; that stretch reads NENSDNSMNT. Over residues 348-357 the composition is skewed to acidic residues; sequence DNNDDSDDSE. Residues 433–495 are a coiled coil; that stretch reads ELKIQEMEKI…KRRQKRSQRS (63 aa). Residues 454-501 show a composition bias toward basic and acidic residues; it reads DKIDMDQIKSEMSRRRDESNKRRDEKRKDREEKRRQKRSQRSDTRKQG. Residues 507–527 show a composition bias toward low complexity; the sequence is SDEATSDQTQSTDSNNTTQTA.

The protein resides in the virion. This is an uncharacterized protein from Acanthamoeba polyphaga mimivirus (APMV).